The following is a 428-amino-acid chain: 3-deoxy-D-manno-octulosonic acid transferase (428 aa).

Glu-64 (proton acceptor) is an active-site residue. CMP-binding positions include 274–275, 316–318, and 342–345; these read PR, LGE, and NLIE.

Belongs to the glycosyltransferase group 1 family. Glycosyltransferase 30 subfamily.

It is found in the cell inner membrane. The enzyme catalyses lipid IVA (E. coli) + CMP-3-deoxy-beta-D-manno-octulosonate = alpha-Kdo-(2-&gt;6)-lipid IVA (E. coli) + CMP + H(+). The protein operates within bacterial outer membrane biogenesis; LPS core biosynthesis. Involved in lipopolysaccharide (LPS) biosynthesis. Catalyzes the transfer of a single 3-deoxy-D-manno-octulosonate (Kdo) residue from CMP-Kdo to lipid IV(A), the tetraacyldisaccharide-1,4'-bisphosphate precursor of lipid A. This chain is 3-deoxy-D-manno-octulosonic acid transferase (waaA), found in Bordetella pertussis.